A 97-amino-acid chain; its full sequence is Protein RnfH (97 aa).

Belongs to the UPF0125 (RnfH) family.

This Paramagnetospirillum magneticum (strain ATCC 700264 / AMB-1) (Magnetospirillum magneticum) protein is Protein RnfH.